The chain runs to 148 residues: Large ribosomal subunit protein uL15 (148 aa).

A disordered region spans residues 1–51 (MNLSSLKPAEGAVKSRKRIGRGPGSGLGGTSTRGHKGAKSRSGYSKKIGFE). The segment covering 21–31 (RGPGSGLGGTS) has biased composition (gly residues).

This sequence belongs to the universal ribosomal protein uL15 family. As to quaternary structure, part of the 50S ribosomal subunit.

Functionally, binds to the 23S rRNA. The protein is Large ribosomal subunit protein uL15 of Porphyromonas gingivalis (strain ATCC BAA-308 / W83).